We begin with the raw amino-acid sequence, 117 residues long: UPF0102 protein Rsph17025_0472 (117 aa).

Belongs to the UPF0102 family.

In Cereibacter sphaeroides (strain ATCC 17025 / ATH 2.4.3) (Rhodobacter sphaeroides), this protein is UPF0102 protein Rsph17025_0472.